A 141-amino-acid polypeptide reads, in one-letter code: Large ribosomal subunit protein uL16 (141 aa).

The protein belongs to the universal ribosomal protein uL16 family. As to quaternary structure, part of the 50S ribosomal subunit.

Functionally, binds 23S rRNA and is also seen to make contacts with the A and possibly P site tRNAs. The protein is Large ribosomal subunit protein uL16 of Campylobacter hominis (strain ATCC BAA-381 / DSM 21671 / CCUG 45161 / LMG 19568 / NCTC 13146 / CH001A).